Consider the following 80-residue polypeptide: Exodeoxyribonuclease 7 small subunit (80 aa).

Belongs to the XseB family. As to quaternary structure, heterooligomer composed of large and small subunits.

It localises to the cytoplasm. The enzyme catalyses Exonucleolytic cleavage in either 5'- to 3'- or 3'- to 5'-direction to yield nucleoside 5'-phosphates.. Its function is as follows. Bidirectionally degrades single-stranded DNA into large acid-insoluble oligonucleotides, which are then degraded further into small acid-soluble oligonucleotides. In Vibrio parahaemolyticus serotype O3:K6 (strain RIMD 2210633), this protein is Exodeoxyribonuclease 7 small subunit.